A 494-amino-acid chain; its full sequence is UPF0371 protein STER_1332 (494 aa).

The protein belongs to the UPF0371 family.

This chain is UPF0371 protein STER_1332, found in Streptococcus thermophilus (strain ATCC BAA-491 / LMD-9).